A 211-amino-acid chain; its full sequence is ATP phosphoribosyltransferase (211 aa).

Belongs to the ATP phosphoribosyltransferase family. Short subfamily. Heteromultimer composed of HisG and HisZ subunits.

Its subcellular location is the cytoplasm. The catalysed reaction is 1-(5-phospho-beta-D-ribosyl)-ATP + diphosphate = 5-phospho-alpha-D-ribose 1-diphosphate + ATP. It functions in the pathway amino-acid biosynthesis; L-histidine biosynthesis; L-histidine from 5-phospho-alpha-D-ribose 1-diphosphate: step 1/9. Catalyzes the condensation of ATP and 5-phosphoribose 1-diphosphate to form N'-(5'-phosphoribosyl)-ATP (PR-ATP). Has a crucial role in the pathway because the rate of histidine biosynthesis seems to be controlled primarily by regulation of HisG enzymatic activity. The polypeptide is ATP phosphoribosyltransferase (Pseudomonas savastanoi pv. phaseolicola (strain 1448A / Race 6) (Pseudomonas syringae pv. phaseolicola (strain 1448A / Race 6))).